A 101-amino-acid chain; its full sequence is Small ribosomal subunit protein uS14 (101 aa).

It belongs to the universal ribosomal protein uS14 family. In terms of assembly, part of the 30S ribosomal subunit. Contacts proteins S3 and S10.

Its function is as follows. Binds 16S rRNA, required for the assembly of 30S particles and may also be responsible for determining the conformation of the 16S rRNA at the A site. This Shewanella piezotolerans (strain WP3 / JCM 13877) protein is Small ribosomal subunit protein uS14.